An 88-amino-acid chain; its full sequence is FXYD domain-containing ion transport regulator 3 (88 aa).

A signal peptide spans 1–20; that stretch reads MQEFALSLLVLLAGLPTLDA. Over 21 to 38 the chain is Extracellular; that stretch reads NDPEDKDSPFYYDWHSLR. Residues 39–59 traverse the membrane as a helical segment; sequence VGGLICAGILCALGIIVLMSG. Residues 60 to 88 are Cytoplasmic-facing; the sequence is KCKCKFSQKPSHRPGDGPPLITPGSAHNC. Residues 66–88 are disordered; that stretch reads SQKPSHRPGDGPPLITPGSAHNC.

This sequence belongs to the FXYD family. In terms of assembly, regulatory subunit of the sodium/potassium-transporting ATPase which is composed of a catalytic alpha subunit, a non-catalytic beta subunit and an additional regulatory subunit. Interacts with catalytic alpha subunit ATP1A1. Also interacts with non-catalytic beta subunit ATP1B1. Interacts with the alpha1-beta1, alpha2-beta1 and alpha3-beta1 NKA isozymes. Post-translationally, glutathionylated.

The protein localises to the cell membrane. In terms of biological role, associates with and regulates the activity of the sodium/potassium-transporting ATPase (NKA) which transports Na(+) out of the cell and K(+) into the cell. Reduces glutathionylation of the NKA beta-1 subunit ATP1B1, thus reversing glutathionylation-mediated inhibition of ATP1B1. Induces a hyperpolarization-activated chloride current when expressed in Xenopus oocytes. This is FXYD domain-containing ion transport regulator 3 (Fxyd3) from Rattus norvegicus (Rat).